The primary structure comprises 599 residues: Elongation factor 4 (599 aa).

The tr-type G domain maps to 5-187 (SHIRNFSIIA…VLIKSVPAPV (183 aa)). GTP-binding positions include 17–22 (DHGKST) and 134–137 (NKID).

This sequence belongs to the TRAFAC class translation factor GTPase superfamily. Classic translation factor GTPase family. LepA subfamily.

The protein localises to the cell inner membrane. It catalyses the reaction GTP + H2O = GDP + phosphate + H(+). Its function is as follows. Required for accurate and efficient protein synthesis under certain stress conditions. May act as a fidelity factor of the translation reaction, by catalyzing a one-codon backward translocation of tRNAs on improperly translocated ribosomes. Back-translocation proceeds from a post-translocation (POST) complex to a pre-translocation (PRE) complex, thus giving elongation factor G a second chance to translocate the tRNAs correctly. Binds to ribosomes in a GTP-dependent manner. The chain is Elongation factor 4 from Saccharophagus degradans (strain 2-40 / ATCC 43961 / DSM 17024).